Here is a 182-residue protein sequence, read N- to C-terminus: ATP-dependent protease subunit HslV (182 aa).

Thr-6 is an active-site residue. 3 residues coordinate Na(+): Ala-164, Cys-167, and Thr-170.

Belongs to the peptidase T1B family. HslV subfamily. A double ring-shaped homohexamer of HslV is capped on each side by a ring-shaped HslU homohexamer. The assembly of the HslU/HslV complex is dependent on binding of ATP.

It is found in the cytoplasm. The catalysed reaction is ATP-dependent cleavage of peptide bonds with broad specificity.. Allosterically activated by HslU binding. Functionally, protease subunit of a proteasome-like degradation complex believed to be a general protein degrading machinery. This is ATP-dependent protease subunit HslV from Borrelia garinii subsp. bavariensis (strain ATCC BAA-2496 / DSM 23469 / PBi) (Borreliella bavariensis).